Here is a 479-residue protein sequence, read N- to C-terminus: Ribulose bisphosphate carboxylase large chain (479 aa).

Positions 1–2 (MS) are excised as a propeptide. Substrate contacts are provided by Asn123 and Thr173. Catalysis depends on Lys175, which acts as the Proton acceptor. Residue Lys177 coordinates substrate. Mg(2+)-binding residues include Lys201, Asp203, and Glu204. Residue Lys201 is modified to N6-carboxylysine. A Phosphoserine modification is found at Ser208. His294 serves as the catalytic Proton acceptor. 2 residues coordinate substrate: Arg295 and His327. Thr330 is modified (phosphothreonine). Ser379 contacts substrate.

Belongs to the RuBisCO large chain family. Type I subfamily. Heterohexadecamer of 8 large chains and 8 small chains; disulfide-linked. The disulfide link is formed within the large subunit homodimers. Mg(2+) is required as a cofactor. Post-translationally, the disulfide bond which can form in the large chain dimeric partners within the hexadecamer appears to be associated with oxidative stress and protein turnover.

The protein resides in the plastid. It is found in the chloroplast. The enzyme catalyses 2 (2R)-3-phosphoglycerate + 2 H(+) = D-ribulose 1,5-bisphosphate + CO2 + H2O. It carries out the reaction D-ribulose 1,5-bisphosphate + O2 = 2-phosphoglycolate + (2R)-3-phosphoglycerate + 2 H(+). Its function is as follows. RuBisCO catalyzes two reactions: the carboxylation of D-ribulose 1,5-bisphosphate, the primary event in carbon dioxide fixation, as well as the oxidative fragmentation of the pentose substrate in the photorespiration process. Both reactions occur simultaneously and in competition at the same active site. This Barbarea verna (Land cress) protein is Ribulose bisphosphate carboxylase large chain.